The following is an 832-amino-acid chain: DEAD-box ATP-dependent RNA helicase 13 (832 aa).

Residues 1–12 (MAAAPPPPPPPQ) are compositionally biased toward pro residues. Disordered stretches follow at residues 1–59 (MAAA…TMVE) and 91–173 (VEDL…DDNV). A compositionally biased stretch (basic residues) spans 29 to 42 (RKGKKSRGAKKPRR). A compositionally biased stretch (low complexity) spans 43–55 (AAAAAAASTSSAG). Basic residues predominate over residues 105-114 (QKKKKRKKRK). Acidic residues predominate over residues 128–137 (LVVECEEEGE). The segment covering 141–155 (KRVKKKRRSRKKRKV) has biased composition (basic residues). A compositionally biased stretch (basic and acidic residues) spans 156–167 (KEMEEKMESKED). The Q motif signature appears at 198-226 (YAWRELRLHPLLITAVRRLGFKEPTPIQK). One can recognise a Helicase ATP-binding domain in the interval 230-447 (PAAAHQGKDV…KLKRGLVTAK (218 aa)). 243-250 (AETGSGKT) contacts ATP. A DEAD box motif is present at residues 371–374 (DEAD). In terms of domain architecture, Helicase C-terminal spans 484 to 645 (KLEESFIECS…QFPVDHAYMP (162 aa)). The segment at 800-832 (RRLAENWRRKKQKEKKSTREQKRKEKRIAKERD) is disordered. The segment covering 814 to 832 (KKSTREQKRKEKRIAKERD) has biased composition (basic and acidic residues).

It belongs to the DEAD box helicase family. DDX24/MAK5 subfamily.

The catalysed reaction is ATP + H2O = ADP + phosphate + H(+). The chain is DEAD-box ATP-dependent RNA helicase 13 from Oryza sativa subsp. japonica (Rice).